The primary structure comprises 273 residues: Probable nicotinate-nucleotide pyrophosphorylase [carboxylating] (273 aa).

Substrate is bound by residues R91, 124 to 126 (TRK), R148, K158, E188, D209, 235 to 237 (SGN), and 256 to 258 (VGA).

Belongs to the NadC/ModD family. Hexamer formed by 3 homodimers.

The enzyme catalyses nicotinate beta-D-ribonucleotide + CO2 + diphosphate = quinolinate + 5-phospho-alpha-D-ribose 1-diphosphate + 2 H(+). The protein operates within cofactor biosynthesis; NAD(+) biosynthesis; nicotinate D-ribonucleotide from quinolinate: step 1/1. Functionally, involved in the catabolism of quinolinic acid (QA). The protein is Probable nicotinate-nucleotide pyrophosphorylase [carboxylating] (nadC) of Helicobacter pylori (strain J99 / ATCC 700824) (Campylobacter pylori J99).